The primary structure comprises 2602 residues: Filamin-B (2602 aa).

The actin-binding stretch occupies residues 1–239 (MPVTEKDLAE…VMTYLSQFPK (239 aa)). 2 consecutive Calponin-homology (CH) domains span residues 16–122 (KIQQ…LHYS) and 139–242 (QTPK…KAKL). Residue Thr216 is modified to Phosphothreonine. Residues 244–267 (PGAPLKPKLNPKKARAYGRGIEPT) form a disordered region. Filamin repeat units follow at residues 249-347 (KPKL…EVSV), 349-446 (KAQG…VVQV), 447-543 (GEAC…EVQV), 544-636 (GPEA…MAFI), 640-736 (TGGY…RVNI), 737-839 (GQGS…RVKV), 840-938 (DPSH…TVGV), 939-1034 (AAPL…TVEA), 1035-1127 (SLPP…KADI), 1128-1222 (EMPF…RVKV), 1223-1322 (EPAV…KVAV), 1323-1415 (TEGC…RVPV), 1416-1511 (KDVV…KVKV), 1512-1608 (LPTY…RIRA), and 1609-1704 (TQTG…TVMA). The residue at position 519 (Thr519) is a Phosphothreonine. Lys681 is subject to N6-acetyllysine. Ser730 carries the post-translational modification Phosphoserine. A phosphoserine mark is found at Ser886, Ser932, Ser983, and Ser1028. Positions 1128-1511 (EMPFDPSKVV…IPRSPFKVKV (384 aa)) are interaction with FBLP1. Thr1307 carries the phosphothreonine modification. The residue at position 1316 (Ser1316) is a Phosphoserine. Phosphoserine occurs at positions 1433, 1474, 1505, and 1602. A hinge 1 region spans residues 1705–1728 (TDGEVTAVEEAPVNACPPGFRPWV). 8 Filamin repeats span residues 1729 to 1813 (TEEA…SPLQ), 1816 to 1908 (VNYP…TAKI), 1919 to 1994 (KLGS…SIMV), 1997 to 2089 (SEIG…TVKI), 2091 to 2185 (GEGR…QFTV), 2188 to 2280 (LGEG…LVPV), 2282 to 2375 (APSD…KVRV), and 2379 to 2471 (GQAG…KAKV). Lys1780 carries the post-translational modification N6-acetyllysine. Residues 1862 to 2148 (SKAEISCIDN…RVTEAEIVPM (287 aa)) form an interaction with the cytoplasmic tail of GP1BA region. The tract at residues 2060 to 2225 (SYFPTVPGVY…IWTREAGAGG (166 aa)) is interaction with FLNA 1. A phosphoserine mark is found at Ser2083, Ser2107, and Ser2113. The interval 2130-2602 (SAHVTSPSGR…PGSPFHVTVP (473 aa)) is interaction with INPPL1. Phosphoserine is present on residues Ser2369 and Ser2465. A Glycyl lysine isopeptide (Lys-Gly) (interchain with G-Cter in ISG15) cross-link involves residue Lys2468. Residues 2472 to 2506 (TGQRLVSPGSANETSSILVESVTRSSTETCYSAIP) form a hinge 2 region. The self-association site, tail stretch occupies residues 2472–2602 (TGQRLVSPGS…PGSPFHVTVP (131 aa)). Residues Ser2478, Ser2481, and Ser2492 each carry the phosphoserine modification. Residues 2507–2601 (KASSDASKVT…IPGSPFHVTV (95 aa)) form a Filamin 24 repeat. Residues 2507–2602 (KASSDASKVT…PGSPFHVTVP (96 aa)) form an interaction with FLNA 2 region. An N6-succinyllysine mark is found at Lys2518 and Lys2524. N6-acetyllysine is present on Lys2576.

It belongs to the filamin family. Homodimer. Interacts with MICALL2. Interacts with RFLNA and RFLNB. Isoform 1 interacts with FBLP1, FLNA, FLNC, GP1BA, INPPL1, ITGB1A, PSEN1 and PSEN2. Isoform 3 interacts with ITGB1A, ITGB1D, ITGB3 and ITGB6. Interacts with MYOT and MYOZ1. Interacts with HBV capsid protein. Interacts with ASB2 isoform 1; the interaction targets FLNB for proteasomal degradation. Post-translationally, ISGylation prevents ability to interact with the upstream activators of the JNK cascade and inhibits IFNA-induced JNK signaling. In terms of processing, ubiquitination by a SCF-like complex containing ASB2 isoform 1 leads to proteasomal degradation which promotes muscle differentiation. Ubiquitous. Isoform 1 and isoform 2 are expressed in placenta, bone marrow, brain, umbilical vein endothelial cells (HUVEC), retina and skeletal muscle. Isoform 1 is predominantly expressed in prostate, uterus, liver, thyroid, stomach, lymph node, small intestine, spleen, skeletal muscle, kidney, placenta, pancreas, heart, lung, platelets, endothelial cells, megakaryocytic and erythroleukemic cell lines. Isoform 2 is predominantly expressed in spinal cord, platelet and Daudi cells. Also expressed in thyroid adenoma, neurofibrillary tangles (NFT), senile plaques in the hippocampus and cerebral cortex in Alzheimer disease (AD). Isoform 3 and isoform 6 are expressed predominantly in lung, heart, skeletal muscle, testis, spleen, thymus and leukocytes. Isoform 4 and isoform 5 are expressed in heart.

The protein resides in the cytoplasm. It localises to the cell cortex. Its subcellular location is the cytoskeleton. The protein localises to the stress fiber. It is found in the myofibril. The protein resides in the sarcomere. It localises to the z line. Connects cell membrane constituents to the actin cytoskeleton. May promote orthogonal branching of actin filaments and links actin filaments to membrane glycoproteins. Anchors various transmembrane proteins to the actin cytoskeleton. Interaction with FLNA may allow neuroblast migration from the ventricular zone into the cortical plate. Various interactions and localizations of isoforms affect myotube morphology and myogenesis. Isoform 6 accelerates muscle differentiation in vitro. The sequence is that of Filamin-B (FLNB) from Homo sapiens (Human).